We begin with the raw amino-acid sequence, 164 residues long: Cold-inducible RNA-binding protein (164 aa).

In terms of domain architecture, RRM spans 6–84; it reads GKLFVGGLSF…RQIRVDQAGK (79 aa). Residues 65-164 form a disordered region; the sequence is AGMNGKTVDG…SYRDSYDSYG (100 aa). Gly residues predominate over residues 93–118; sequence YRGGSSGGGRGFFRGGRGRGGGGYGG. Positions 155-164 are enriched in basic and acidic residues; sequence SYRDSYDSYG.

In terms of assembly, interacts with prmt1. Interacts with elavl1/elrA (via RRM3). Associates with ribosomes. Post-translationally, methylated on arginine residues within RGG motifs. Methylation by prmt1 promotes cytoplasmic accumulation.

It is found in the nucleus. Its subcellular location is the nucleoplasm. It localises to the cytoplasm. In terms of biological role, cold-inducible mRNA binding protein. Acts cooperatively with elavl1/elrA to stabilize AU-rich element (ARE)-containing mRNAs by binding to them and inhibiting their deadenylation. Essential for embryonic gastrulation and neural development, acting to maintain the expression of a set of adhesion molecules, and cell movement during embryogenesis. Required for pronephros development. May play a role in hibernation. This chain is Cold-inducible RNA-binding protein, found in Aquarana catesbeiana (American bullfrog).